A 436-amino-acid chain; its full sequence is T-box transcription factor TBX6 (436 aa).

Positions 100-273 (LWKEFSAVGT…ANPFAKGFRE (174 aa)) form a DNA-binding region, T-box. Basic and acidic residues predominate over residues 274–284 (NGRNCKRERDA). Disordered stretches follow at residues 274 to 344 (NGRN…CGGP) and 360 to 383 (PSHL…APYS). Over residues 332-344 (EAASASAPPCGGP) the composition is skewed to low complexity.

It is found in the nucleus. Functionally, T-box transcription factor that plays an essential role in the determination of the fate of axial stem cells: neural vs mesodermal. Acts in part by down-regulating, a specific enhancer (N1) of SOX2, to inhibit neural development. Seems to play also an essential role in left/right axis determination and acts through effects on Notch signaling around the node as well as through an effect on the morphology and motility of the nodal cilia. The protein is T-box transcription factor TBX6 (Tbx6) of Mus musculus (Mouse).